The chain runs to 163 residues: Probable cobalt-precorrin-6B C(15)-methyltransferase (decarboxylating) (163 aa).

S-adenosyl-L-methionine contacts are provided by residues Thr6, 30 to 34, Asp51, and Gly75; that span reads GCGSG.

It belongs to the methyltransferase superfamily. Archaeal-type CbiT family.

The enzyme catalyses Co-precorrin-6B + S-adenosyl-L-methionine = Co-precorrin-7 + S-adenosyl-L-homocysteine + CO2. It participates in cofactor biosynthesis; adenosylcobalamin biosynthesis; cob(II)yrinate a,c-diamide from sirohydrochlorin (anaerobic route): step 8/10. In terms of biological role, catalyzes the methylation of C-15 in cobalt-precorrin-6B followed by the decarboxylation of C-12 to form cobalt-precorrin-7. In Archaeoglobus fulgidus (strain ATCC 49558 / DSM 4304 / JCM 9628 / NBRC 100126 / VC-16), this protein is Probable cobalt-precorrin-6B C(15)-methyltransferase (decarboxylating).